The primary structure comprises 514 residues: ATP synthase subunit alpha (514 aa).

An ATP-binding site is contributed by G170–T177.

This sequence belongs to the ATPase alpha/beta chains family. In terms of assembly, F-type ATPases have 2 components, CF(1) - the catalytic core - and CF(0) - the membrane proton channel. CF(1) has five subunits: alpha(3), beta(3), gamma(1), delta(1), epsilon(1). CF(0) has three main subunits: a(1), b(2) and c(9-12). The alpha and beta chains form an alternating ring which encloses part of the gamma chain. CF(1) is attached to CF(0) by a central stalk formed by the gamma and epsilon chains, while a peripheral stalk is formed by the delta and b chains.

The protein localises to the cell inner membrane. It carries out the reaction ATP + H2O + 4 H(+)(in) = ADP + phosphate + 5 H(+)(out). Its function is as follows. Produces ATP from ADP in the presence of a proton gradient across the membrane. The alpha chain is a regulatory subunit. The sequence is that of ATP synthase subunit alpha from Alcanivorax borkumensis (strain ATCC 700651 / DSM 11573 / NCIMB 13689 / SK2).